We begin with the raw amino-acid sequence, 2768 residues long: MEQYVASAINLLSSPKLKERSQALTDVAAIVKDNPDTLTSKSVGALVQSLIDILDAETRKFDELCRRRPEAGARVELAQGRLNSVVAVLRLVLETIPDRLRAKQFRGLVLSLPELLGWAIREQVHDMLQPLSACLQALTECHTFKLKVDDGQWRTLVRASAEDLVALFGINCTHKSIAKLAGALTSLIRMDAVGFKDVCEELLLIPVRYYQNTDKETANMRSILQLCNLLVLKGHLIKFHGVQYLIHCTMQHLLQFTLPGTDYILEEIAVFTLFSAELMIHEVPYIPGDLESGRYFGKEVLSELYQQFIVHLLENYRPQKLQLKDLEYRLLLDRRQWYQLDDFQISPHASHIEWLQLQGISNMLCSYYAFQHRHPVMDISQVKRRRLSDTYNSFLLNSQYGISFATSCIDSNPVSSQLLGLQLAACVTSFHECPKYQLEELLDAILRRFENANLVGWCCLAMLPLCSQLDLVISETVLQKLLKLTLPLLKIPTLSAVASALISKLLDYQQRTLTGSNMLQQCYDLYELSDIIGPAVVSNESFRLWQSLHIYGGDFRGKDGSSAADRIANWLFAKLNTVSPLDESQNSFPHFLGWLAGCQLKDAYEVNRAIHVNSYCLEWEYTSVERTFLLSIETSRRLSRNRTTPLQNMNYESSSISELFYRILDKITSQDDIEAYGWMCFGLQLIHHIRELTYLVEYVNDLKKAICLRLGKMNFGNSQILLSCIRQTTSLPSCDILPLFFTEREIANIIYTYKELKLTEVPEGPAEDDFAGPAKARHKLYPLNHLYAGKQGFEIDYVVSFIIMCSDYETNGDAAEKVIELFLQLARSLPTNLIFQALPTLITYIGSNDRENISEDTLLALTEFTGSSLLTNEYNTSTLSITYLSLFLKSISRYWLSDTHMPSLTADCNDILEWIFSRLGDSSCIGCEAIMAILDMTLHMLKNYNRSNSKFTFDKQHLFHVLTTCLGRLPKFYICKVVHELNSYVVRLGLKNQSIIFSEFAGLFDPPQRDAETAAYYSLTLAGLGTISHMHLSNAILHVLPNLQHKHVSQYALSFLKSVAGFHKLSGIRALFHLCRFEILDIWSNKCAGLRDFSPIWNTAIFQFESFEQFINEYKHEVAAYYFAKLSPYHYLKSTLVNDDKELPQLLEISLQYAIPLAYIPGGIGDAIFDICADQWSATNHTNVLKQQYLLIFDRLLHFADLTVFMEYFESLQKVYTNSELIHKMKKYTYNLHPKHLLSYSLRTALKVIHSKVLLGKLSIQELRFLLTLNLQYLQESTLPDDRSQILRKIQIILVAYEQQLEDASSVSDLLEILTDYLDDPLLGNEVGALIGSIVALGFNVKYTESLFLCIFAKLLPQLHEAKTANLSILLNDISNTLTINNSNIIHGKWWHACIDALAGTSLFENTIYHDDSLLDTELLDHRALNLYSEILSFLPPFTGFPPNFVPKERVLRHLISQTTTFKLHDNFLLWKGHYIGMYHKFHGTIPQLAPNGPNQKLSIDKLVKNYGLLNGIFELLEAIEKTTHARIKFICQCINAVSLSHKDSLSTFTADTQQFFGQLSSKSVPLDLALFFYMFPISNPSESMETFCRLHYPALTSDYSSWLVKLTMFALDMLGRYIPVVKCFEVLATAITSRVEQLLNYWLLLLLYCDPNNGIRLLCTLISNIGLLKSTKEGILKIKYMLNLLLIVRSFHKLGYKEFDTIYDRISLQDAYKVAAEVGEKYIACLLFEEFHMPNLARLDVTYMKEIYKQFDDVDMIYGIPTTASLASAIELINQTQATSLKSFMMNNGNFDAQYATHFTGNIGNLVNSASNNGFTGLAYALQNISSSKNTSATYNWCIELDKWDLPTPDILDSTAKSIYSIIKKTDINTGTAEAAFKSTMLNALQFLEKTGVNEDNVSQLGSIVTMVQLYNNNAEKLVKSLHAQDRKILKVKDFNDYYMDIKVRHVFLDHLIDSHKNRLSEEQSICLRFASICELSHLSEVARGASDFQRSLDAVLLLEKSVLALPTNSSVEHYGLFKTFARRMSTIQSAKMLWSQNETVMSIDMLKDLLHTPLSSNLIARARKQPFFQQMAILDINVKAQLVQWLSHSRQDVPERIFKNYIGTSLQDIENYGDNPSRTEIVHTFGKFCYDQAKRFSETNEVDIMARRVSKNKEELAALYQLYHDRSLPERERKEAKRHYARLLVRNQQETETYNQLRDQRELFVTNALLFFTQTLQYDDLYDGEVIDQFCGLWFEYSNDDNVSGKLLSNLQNIPEYKLLPWINQMASKLADDESPFQKTLRAAMVRILLKLPYDSLYVLIGMSLTGSRQNAKDSGSQSRLVAVESLLKEVSKHDYGSYATKYLLPVREFCEMSVSLASQKFAQNTRKIHLNNLKIGTYWLKELKGRKLPLPTAQSRVSDRCGNSVSRSYITQVDPDVRIASSGLSLPKIVTFTLSDGTRHRALLKAGNDDLRQDAIMEQVFKQVNKILTSNKRTRKLKLRIRTYEVIPLGPQAGIIEFAPNSKSLHEILAGYHKDDTISLEQARKAMKAVQGKSKEQRIAVYVKITESVKPVLRNFFYETFLDPEEWLLAKATYTKGVVTNSIVGHILGLGDRHLNNILLDKFTGEPIHIDLGVAFDQGKLLPLPELVPFRLTRDIVDGFGVMGVEGLFRKNCEKVYGLLRKERERVMCVLNVLKWDPLYSWKMTPLRRQKLQGKLVDGDSPSDSLVTSLPDSSDNDESRRALKGVEDKLLGNGLSVEATVQELVHRATDVSNLAVIFMGWSPFY.

In terms of domain architecture, FAT spans 1825–2308; the sequence is NISSSKNTSA…LYVLIGMSLT (484 aa). Residues 2141-2204 are a coiled coil; sequence TNEVDIMARR…TYNQLRDQRE (64 aa). Residues 2417 to 2724 form the PI3K/PI4K catalytic domain; that stretch reads DPDVRIASSG…DSSDNDESRR (308 aa). Positions 2423-2429 are G-loop; that stretch reads ASSGLSL. The interval 2592–2600 is catalytic loop; the sequence is GLGDRHLNN. The activation loop stretch occupies residues 2612 to 2636; sequence HIDLGVAFDQGKLLPLPELVPFRLT. Residues 2696 to 2722 form a disordered region; sequence QGKLVDGDSPSDSLVTSLPDSSDNDES. Residues 2705-2716 show a composition bias toward polar residues; the sequence is PSDSLVTSLPDS. One can recognise an FATC domain in the interval 2736 to 2768; sequence NGLSVEATVQELVHRATDVSNLAVIFMGWSPFY.

This sequence belongs to the PI3/PI4-kinase family. ATM subfamily. In terms of assembly, associates with DNA double-strand breaks.

It is found in the nucleus. Its subcellular location is the chromosome. It localises to the telomere. It catalyses the reaction L-seryl-[protein] + ATP = O-phospho-L-seryl-[protein] + ADP + H(+). The catalysed reaction is L-threonyl-[protein] + ATP = O-phospho-L-threonyl-[protein] + ADP + H(+). Its function is as follows. Serine/threonine protein kinase which activates checkpoint signaling upon genotoxic stresses such as ionizing radiation (IR), ultraviolet light (UV), or DNA replication stalling, thereby acting as a DNA damage sensor. Recognizes the substrate consensus sequence [ST]-Q. Phosphorylates histone H2A to form H2AS128ph (gamma-H2A) at sites of DNA damage, involved in the regulation of DNA damage response mechanism. Required for the control of telomere length and genome stability. This Eremothecium gossypii (strain ATCC 10895 / CBS 109.51 / FGSC 9923 / NRRL Y-1056) (Yeast) protein is Serine/threonine-protein kinase TEL1 (TEL1).